A 167-amino-acid chain; its full sequence is Ribosome maturation factor RimP (167 aa).

It belongs to the RimP family.

It localises to the cytoplasm. In terms of biological role, required for maturation of 30S ribosomal subunits. The polypeptide is Ribosome maturation factor RimP (Cytophaga hutchinsonii (strain ATCC 33406 / DSM 1761 / CIP 103989 / NBRC 15051 / NCIMB 9469 / D465)).